Here is a 445-residue protein sequence, read N- to C-terminus: Phosphoglucosamine mutase (445 aa).

Ser101 (phosphoserine intermediate) is an active-site residue. Residues Ser101, Asp240, Asp242, and Asp244 each coordinate Mg(2+). Residue Ser101 is modified to Phosphoserine.

Belongs to the phosphohexose mutase family. It depends on Mg(2+) as a cofactor. Activated by phosphorylation.

It carries out the reaction alpha-D-glucosamine 1-phosphate = D-glucosamine 6-phosphate. In terms of biological role, catalyzes the conversion of glucosamine-6-phosphate to glucosamine-1-phosphate. The sequence is that of Phosphoglucosamine mutase from Pseudomonas paraeruginosa (strain DSM 24068 / PA7) (Pseudomonas aeruginosa (strain PA7)).